The primary structure comprises 558 residues: Methionine--tRNA ligase 1 (558 aa).

The short motif at 10–20 (PYINGIKHLGN) is the 'HIGH' region element. Zn(2+)-binding residues include cysteine 142, cysteine 145, cysteine 155, and cysteine 158. Residues 332-336 (KFSTS) carry the 'KMSKS' region motif. Threonine 335 provides a ligand contact to ATP.

Belongs to the class-I aminoacyl-tRNA synthetase family. MetG type 1 subfamily. In terms of assembly, monomer. Zn(2+) is required as a cofactor.

The protein resides in the cytoplasm. It carries out the reaction tRNA(Met) + L-methionine + ATP = L-methionyl-tRNA(Met) + AMP + diphosphate. Is required not only for elongation of protein synthesis but also for the initiation of all mRNA translation through initiator tRNA(fMet) aminoacylation. In Acaryochloris marina (strain MBIC 11017), this protein is Methionine--tRNA ligase 1.